The primary structure comprises 472 residues: UDP-glycosyltransferase 2 (472 aa).

UDP-alpha-D-glucose-binding positions include S283, 348–349 (WA), 366–374 (HCGWNSVLE), and 388–391 (YAEQ).

Belongs to the UDP-glycosyltransferase family. In terms of tissue distribution, highly expressed in roots. Expressed in leaves and stems.

Glycosyltransferase that possesses isoflavonoids 4'-O- and 7-O-glucosyltransferase activities. Shows a successive glucosylation toward the acceptors producing their corresponding 4',7-O-diglucosides. Can use genistein, formononetin, daidzein, liquiritigenin and naringenin as substrates. Also shows a 3'-O-glucosylation activity in vitro. The protein is UDP-glycosyltransferase 2 of Pueraria montana var. lobata (Kudzu vine).